Reading from the N-terminus, the 461-residue chain is MALWGGRFSQESSALFKLFNDSLPVDYRLIEQDIIGSIAWASAITQVGVLTTDECTQLHAALNELLAETSTNPELIIASGAEDIHSFVEQSLIAKVGDLGKKLHTGRSRNDQVATDLKLWCKKEGQELLELLGKLRTALIELAEREIDAVMPGYTHLQRAQPVLFGHWCLAYVEMFERDISRLQDALKRADTCPLGTGALAGTAYPMDRVKLAQSLGFASPTLNSLDTVSDRDHVVEICSDASISMMHLSRMAEDLIFFNSGEAGFIELDDEVTSGSSLMPQKKNPDALELIRGKTGRVYGSLIGILTTMKALPLAYNKDMQEDKEGLFDVMDSWAICLEMAALVLSGLQVNRERTLSAAQQGYANSTELADYLVAKGMPFREAHHVVGEAVVNAIAKQTPLEDLPLEELQSFSAIIEADVYECLTIESCLAKREALGGTSLPQVKSALAGKQVIPIALSI.

Belongs to the lyase 1 family. Argininosuccinate lyase subfamily.

Its subcellular location is the cytoplasm. The enzyme catalyses 2-(N(omega)-L-arginino)succinate = fumarate + L-arginine. Its pathway is amino-acid biosynthesis; L-arginine biosynthesis; L-arginine from L-ornithine and carbamoyl phosphate: step 3/3. The sequence is that of Argininosuccinate lyase from Shewanella piezotolerans (strain WP3 / JCM 13877).